A 586-amino-acid polypeptide reads, in one-letter code: Protein NRT1/ PTR FAMILY 5.3 (586 aa).

The next 11 membrane-spanning stretches (helical) occupy residues 77-97 (WVGT…AHFG), 100-120 (ITFV…TLSV), 141-161 (ASVI…IGTG), 189-209 (FFNW…TVLV), 217-237 (WAIG…IFLL), 334-354 (PVLF…TLFI), 370-390 (IPPA…IVIY), 408-428 (ITLL…MIIA), 449-469 (AVPI…MGLA), 492-512 (LGTS…SILL), and 538-558 (NYYM…LVVI).

Belongs to the major facilitator superfamily. Proton-dependent oligopeptide transporter (POT/PTR) (TC 2.A.17) family. Expressed in roots and siliques.

The protein resides in the membrane. Its function is as follows. Peptide transporter. This is Protein NRT1/ PTR FAMILY 5.3 (NPF5.3) from Arabidopsis thaliana (Mouse-ear cress).